The following is a 173-amino-acid chain: MKVYDGSQTESPEQSTPERIKVGIAEYKVTTEPAMLTTSGLGSCIGIAIYDTRNTVAGLVHVMLPSAADIDGGNHAKFADTGIQALIEAMADAGASTEAMEAKIAGGSDMLDFSENGSSIGSRNAKKVRETLDEHGVPVVGEDLGGDHGRSVKLEADTGNFIVKSANTDSITL.

The protein belongs to the CheD family.

It carries out the reaction L-glutaminyl-[protein] + H2O = L-glutamyl-[protein] + NH4(+). In terms of biological role, probably deamidates glutamine residues to glutamate on methyl-accepting chemotaxis receptors (MCPs), playing an important role in chemotaxis. The sequence is that of Probable chemoreceptor glutamine deamidase CheD from Haloarcula marismortui (strain ATCC 43049 / DSM 3752 / JCM 8966 / VKM B-1809) (Halobacterium marismortui).